The following is a 452-amino-acid chain: Na(+)/H(+) antiporter NhaA (452 aa).

Transmembrane regions (helical) follow at residues 27 to 47 (FSGIFLFFCAVVAMISANSAL), 67 to 87 (FIGMSLHHWINDVLMSFFFLM), 108 to 128 (AFPAIAALGGMIVPAIVYTLF), 137 to 157 (GFGIPMATDIAFALGVLLLLG), 166 to 186 (VFLVSLAVVDDLGAVVVIAIF), 194 to 214 (LWLLYSVVILGLLIGLNKMGV), 216 to 236 (SLFPYAILGVLLWITVHNCGI), 314 to 334 (PWSAYFIMPVFAFANAGVAIS), 343 to 363 (GVLPGIMLGLIVGKPVGILGL), 381 to 401 (WIDILGAGMLAGIGFTMSIFI), and 414 to 434 (VAKIAILSASLFAGALGYFFI).

Belongs to the NhaA Na(+)/H(+) (TC 2.A.33) antiporter family.

The protein resides in the cell inner membrane. It catalyses the reaction Na(+)(in) + 2 H(+)(out) = Na(+)(out) + 2 H(+)(in). Na(+)/H(+) antiporter that extrudes sodium in exchange for external protons. This is Na(+)/H(+) antiporter NhaA from Wolinella succinogenes (strain ATCC 29543 / DSM 1740 / CCUG 13145 / JCM 31913 / LMG 7466 / NCTC 11488 / FDC 602W) (Vibrio succinogenes).